Here is a 95-residue protein sequence, read N- to C-terminus: Co-chaperonin GroES (95 aa).

This sequence belongs to the GroES chaperonin family. In terms of assembly, heptamer of 7 subunits arranged in a ring. Interacts with the chaperonin GroEL.

The protein localises to the cytoplasm. In terms of biological role, together with the chaperonin GroEL, plays an essential role in assisting protein folding. The GroEL-GroES system forms a nano-cage that allows encapsulation of the non-native substrate proteins and provides a physical environment optimized to promote and accelerate protein folding. GroES binds to the apical surface of the GroEL ring, thereby capping the opening of the GroEL channel. This chain is Co-chaperonin GroES, found in Lachnoclostridium phytofermentans (strain ATCC 700394 / DSM 18823 / ISDg) (Clostridium phytofermentans).